The chain runs to 238 residues: Dolichyldiphosphatase 1 (238 aa).

Helical transmembrane passes span 33–53 (LAYL…LIIF), 100–120 (PSSH…FLYL), 130–150 (FLDL…AFLV), and 162–182 (WSQV…WFII).

The protein belongs to the dolichyldiphosphatase family. Widely expressed with highest levels in brain, kidney, lung and intestine.

The protein localises to the endoplasmic reticulum membrane. The enzyme catalyses a di-trans,poly-cis-dolichyl diphosphate + H2O = a di-trans,poly-cis-dolichyl phosphate + phosphate + H(+). It functions in the pathway protein modification; protein glycosylation. Its function is as follows. Required for efficient N-glycosylation. Necessary for maintaining optimal levels of dolichol-linked oligosaccharides. Hydrolyzes dolichyl pyrophosphate at a very high rate and dolichyl monophosphate at a much lower rate. Does not act on phosphatidate. This chain is Dolichyldiphosphatase 1 (Dolpp1), found in Mus musculus (Mouse).